The primary structure comprises 357 residues: Putative ABC transporter ATP-binding protein MG303 (357 aa).

In terms of domain architecture, ABC transporter spans L72–T312. Residue G107 to T114 participates in ATP binding.

The protein belongs to the ABC transporter superfamily.

This chain is Putative ABC transporter ATP-binding protein MG303, found in Mycoplasma genitalium (strain ATCC 33530 / DSM 19775 / NCTC 10195 / G37) (Mycoplasmoides genitalium).